A 339-amino-acid polypeptide reads, in one-letter code: Uridylate kinase PUMPKIN, chloroplastic (339 aa).

The transit peptide at 1–53 (MAIPLPLTSCSPISTSSSISRTSFVPLTLRNRTFFSNQNYSRRVLISCSSSLS) directs the protein to the chloroplast. Over residues 52 to 79 (LSSDNGSSPDSMNGNGNGNGSSLNGQSS) the composition is skewed to low complexity. The interval 52–89 (LSSDNGSSPDSMNGNGNGNGSSLNGQSSFPRLPSFDGT) is disordered. 102–105 (KVSG) provides a ligand contact to ATP. Residues 110–115 (GDEEQN) are involved in allosteric activation by GTP. UMP is bound at residue Gly-144. The ATP site is built by Gly-145 and Arg-149. Asp-165 contributes to the UMP binding site. ATP-binding positions include 180–184 (QATME) and 189–191 (PTR). A UMP-binding site is contributed by 226-233 (TGNPFFTT). 3 residues coordinate ATP: Thr-253, Phe-259, and Asp-262.

This sequence belongs to the UMP kinase family. Homomultimer. Homohexamer. Forms RNA-containing megadalton-sized complexes. Expressed exclusively in leaves, but not in roots.

The protein localises to the plastid. The protein resides in the chloroplast stroma. The enzyme catalyses UMP + ATP = UDP + ADP. The protein operates within pyrimidine metabolism; CTP biosynthesis via de novo pathway; UDP from UMP (UMPK route): step 1/1. Its function is as follows. Catalyzes the reversible phosphorylation of UMP to UDP. Required for specific post-transcriptional processes of many plastid transcripts (e.g. PSI (PsaA, PsaF), PSII (D1, CP43, CP47), Cytochrome b(6)f (Cytb(6)), ATP synthase (AtpC), LHCs (LHCa3, LHCb2), and NDH (NdhH)), thus being essential for retaining photosynthetic activity in chloroplasts. Associates with group II introns of the plastid transcripts trnG-UCC, trnV-UAC, petB, petD and ndhA to stabilize corresponding precursor RNAs. The chain is Uridylate kinase PUMPKIN, chloroplastic from Arabidopsis thaliana (Mouse-ear cress).